Consider the following 164-residue polypeptide: UPF0262 protein Saro_0143 (164 aa).

The protein belongs to the UPF0262 family.

The sequence is that of UPF0262 protein Saro_0143 from Novosphingobium aromaticivorans (strain ATCC 700278 / DSM 12444 / CCUG 56034 / CIP 105152 / NBRC 16084 / F199).